The following is a 102-amino-acid chain: Large ribosomal subunit protein bL21 (102 aa).

It belongs to the bacterial ribosomal protein bL21 family. As to quaternary structure, part of the 50S ribosomal subunit. Contacts protein L20.

Its function is as follows. This protein binds to 23S rRNA in the presence of protein L20. This chain is Large ribosomal subunit protein bL21, found in Finegoldia magna (strain ATCC 29328 / DSM 20472 / WAL 2508) (Peptostreptococcus magnus).